A 253-amino-acid polypeptide reads, in one-letter code: HTH-type transcriptional activator TipA (253 aa).

The 71-residue stretch at 1 to 71 folds into the HTH merR-type domain; the sequence is MSYSVGQVAG…LDEVAALLDD (71 aa). The segment at residues 5-24 is a DNA-binding region (H-T-H motif); that stretch reads VGQVAGFAGVTVRTLHHYDD.

Homodimer.

Functionally, transcriptional activator. Is activated when bound to the antibiotic thiostrepton. The chain is HTH-type transcriptional activator TipA (tipA) from Streptomyces coelicolor (strain ATCC BAA-471 / A3(2) / M145).